The chain runs to 383 residues: ATP phosphoribosyltransferase regulatory subunit (383 aa).

It belongs to the class-II aminoacyl-tRNA synthetase family. HisZ subfamily. Heteromultimer composed of HisG and HisZ subunits.

It is found in the cytoplasm. The protein operates within amino-acid biosynthesis; L-histidine biosynthesis; L-histidine from 5-phospho-alpha-D-ribose 1-diphosphate: step 1/9. Functionally, required for the first step of histidine biosynthesis. May allow the feedback regulation of ATP phosphoribosyltransferase activity by histidine. This is ATP phosphoribosyltransferase regulatory subunit from Cupriavidus pinatubonensis (strain JMP 134 / LMG 1197) (Cupriavidus necator (strain JMP 134)).